The following is a 302-amino-acid chain: UDP-N-acetylenolpyruvoylglucosamine reductase (302 aa).

The FAD-binding PCMH-type domain maps to 27 to 192; it reads KVGGAVDYLA…LSAKFALRPG (166 aa). Arg171 is an active-site residue. Ser221 (proton donor) is an active-site residue. The active site involves Glu291.

It belongs to the MurB family. Requires FAD as cofactor.

Its subcellular location is the cytoplasm. The catalysed reaction is UDP-N-acetyl-alpha-D-muramate + NADP(+) = UDP-N-acetyl-3-O-(1-carboxyvinyl)-alpha-D-glucosamine + NADPH + H(+). It participates in cell wall biogenesis; peptidoglycan biosynthesis. Its function is as follows. Cell wall formation. This chain is UDP-N-acetylenolpyruvoylglucosamine reductase, found in Streptococcus suis (strain 98HAH33).